The following is a 542-amino-acid chain: TNF receptor-associated factor 6 (542 aa).

Positions 1-374 (MSLLHCENSC…EAQQCNGIYI (374 aa)) are interaction with TAX1BP1. The segment at 71–110 (CPICLMALREAVQTPCGHRFCKACIIKSIRDAGHKCPVDN) adopts an RING-type; degenerate zinc-finger fold. A Glycyl lysine isopeptide (Lys-Gly) (interchain with G-Cter in SUMO); alternate cross-link involves residue Lys-125. Lys-125 is covalently cross-linked (Glycyl lysine isopeptide (Lys-Gly) (interchain with G-Cter in ubiquitin); alternate). Lys-143 is covalently cross-linked (Glycyl lysine isopeptide (Lys-Gly) (interchain with G-Cter in SUMO)). TRAF-type zinc fingers lie at residues 151–203 (EHQA…EDKE) and 204–260 (IHEQ…NHLA). Residues 310-368 (SEVHNFQETIQQLEGRLVRQDHQIRELTAKMETQSMYVNELKRTIRTLEDKVAEIEAQQ) are a coiled coil. Lys-339 participates in a covalent cross-link: Glycyl lysine isopeptide (Lys-Gly) (interchain with G-Cter in ubiquitin). Residues 370–519 (NGIYIWKIGN…DDTLLVRCEV (150 aa)) form the MATH domain. The interaction with TANK stretch occupies residues 375–542 (WKIGNFGMHL…FQPRSTDSGI (168 aa)). Lys-473 is covalently cross-linked (Glycyl lysine isopeptide (Lys-Gly) (interchain with G-Cter in SUMO)).

It belongs to the TNF receptor-associated factor family. A subfamily. As to quaternary structure, homotrimer. Homooligomer. N-terminal region is dimeric while C-terminal region is trimeric; maybe providing a mode of oligomerization. Upon IL1B treatment, forms a complex with PELI1, IRAK1, IRAK4 and MYD88; this complex recruits MAP3K7/TAK1, TAB1 and TAB2 to mediate NF-kappa-B activation. Direct binding of SMAD6 to PELI1 prevents the complex formation and hence negatively regulates IL1R-TLR signaling and eventually NF-kappa-B-mediated gene expression. Binds to TNFRSF5/CD40 and TNFRSF11A/RANK. Associates with NGFR, TNFRSF17, IRAK2, IRAK3, RIPK2, MAP3K1, MAP3K5, MAP3K14, CSK, TRAF, TRAF-interacting protein TRIP and TNF receptor associated protein TDP2. Interacts with IL17R. Interacts with SQSTM1 bridging NTRK1 and NGFR. Forms a ternary complex with SQSTM1 and PRKCZ. Interacts with PELI2 and PELI3. Binds UBE2V1. Interacts with TAX1BP1; this interaction mediates deubiquitination of TRAF6 and inhibition of NF-kappa-B activation. Interacts with ZNF675. Interacts with ARRB1 and ARRB2. Interacts with MAP3K7 and TAB1/MAP3K7IP1; during IL-1 signaling. Interacts with UBE2N. Interacts with TGFBR1, HDAC1 and RANGAP1. Interacts with AKT1, AKT2 and AKT3. Interacts (via TRAF domains) with NUMBL (via C-terminal). Interacts with RBCK1. Interacts with LIMD1 (via LIM domains). Interacts with RSAD2/viperin. Interacts (via C-terminus) with EIF2AK2/PKR (via the kinase catalytic domain). Interacts with ZFAND5. Interacts with IL1RL1. Interacts with TRAFD1. Interacts with AJUBA. Interacts with MAVS/IPS1. Interacts (via TRAF domains) with DYNC2I2 (via WD domains). Interacts with IFIT3 (via N-terminus). Interacts with TICAM2. Interacts with CARD14. Interacts with CD40 and MAP3K8; the interaction is required for ERK activation. Interacts with TICAM1 and this interaction is enhanced in the presence of WDFY1. Interacts with TANK; this interaction increases in response to DNA damage. Interacts with USP10; this interaction increases in response to DNA damage. Interacts with ZC3H12A; this interaction increases in response to DNA damage and is stimulated by TANK. Interacts with WDFY3. Interacts with TRIM13. Interacts with GPS2. Interacts (via C-terminus) with SASH1. Interacts with LRRC19. Interacts with IL17RA and TRAF3IP2. Interacts with TOMM70. Interacts with AMBRA1; interaction is required to mediate 'Lys-63'-linked ubiquitination of ULK1. Interacts with CRBN; this interaction inhibits TLR4-mediated signaling by preventing TRAF6-mediated ubiquitination of ECSIT. Post-translationally, sumoylated on Lys-125, Lys-143 and Lys-473 with SUMO1. Polyubiquitinated on Lys-125 by TRAF3IP2; after cell stimulation with IL17A. Polyubiquitinated on Lys-125; after cell stimulation with IL1B or TGFB. This ligand-induced cell stimulation leads to dimerization/oligomerization of TRAF6 molecules, followed by auto-ubiquitination which involves UBE2N and UBE2V1 and leads to TRAF6 activation. This 'Lys-63' site-specific poly-ubiquitination appears to be associated with the activation of signaling molecules. Endogenous autoubiquitination occurs only for the cytoplasmic form. Deubiquitinated by USP10 in a TANK-dependent manner, leading to the negative regulation of NF-kappa-B signaling upon DNA damage. LRRC19 induces 'Lys-63' ubiquitination. Ubiquitinated at Lys-339 by the SCF(FBXL2) complex, leading to its degradation by the proteasome.

It localises to the cytoplasm. The protein resides in the cell cortex. It is found in the nucleus. The protein localises to the lipid droplet. It catalyses the reaction S-ubiquitinyl-[E2 ubiquitin-conjugating enzyme]-L-cysteine + [acceptor protein]-L-lysine = [E2 ubiquitin-conjugating enzyme]-L-cysteine + N(6)-ubiquitinyl-[acceptor protein]-L-lysine.. It functions in the pathway protein modification; protein ubiquitination. E3 ubiquitin ligase that, together with UBE2N and UBE2V1, mediates the synthesis of 'Lys-63'-linked-polyubiquitin chains conjugated to proteins, such as ECSIT, IKBKG, IRAK1, AKT1 and AKT2. Also mediates ubiquitination of free/unanchored polyubiquitin chain that leads to MAP3K7 activation. Leads to the activation of NF-kappa-B and JUN. Seems to also play a role in dendritic cells (DCs) maturation and/or activation. Represses c-Myb-mediated transactivation, in B-lymphocytes. Adapter protein that seems to play a role in signal transduction initiated via TNF receptor, IL-1 receptor and IL-17 receptor. Regulates osteoclast differentiation by mediating the activation of adapter protein complex 1 (AP-1) and NF-kappa-B, in response to RANK-L stimulation. Together with MAP3K8, mediates CD40 signals that activate ERK in B-cells and macrophages, and thus may play a role in the regulation of immunoglobulin production. Acts as a regulator of the JNK and NF-kappa-B signaling pathways by initiating assembly of heterotypic 'Lys-63'-/'Lys-48'-linked branched ubiquitin chains that are then recognized by TAB2: TRAF6 catalyzes initial 'Lys-63'-linked-polyubiquitin chains that are then branched via 'Lys-48'-linked polyubiquitin by HUWE1. 'Lys-63'-/'Lys-48'-linked branched ubiquitin chains protect 'Lys-63'-linkages from CYLD deubiquitination. Also participates in the TCR signaling by ubiquitinating LAT. The polypeptide is TNF receptor-associated factor 6 (TRAF6) (Bos taurus (Bovine)).